A 199-amino-acid polypeptide reads, in one-letter code: Recombination protein RecR (199 aa).

A C4-type zinc finger spans residues 56–71; sequence CAVCGNIAEETQCRIC. Residues 79–174 enclose the Toprim domain; it reads TVICVVEEPK…KVTRLASGLP (96 aa).

It belongs to the RecR family.

Functionally, may play a role in DNA repair. It seems to be involved in an RecBC-independent recombinational process of DNA repair. It may act with RecF and RecO. In Thermobifida fusca (strain YX), this protein is Recombination protein RecR.